The following is a 159-amino-acid chain: Large ribosomal subunit protein uL10 (159 aa).

Belongs to the universal ribosomal protein uL10 family. In terms of assembly, part of the ribosomal stalk of the 50S ribosomal subunit. The N-terminus interacts with L11 and the large rRNA to form the base of the stalk. The C-terminus forms an elongated spine to which L12 dimers bind in a sequential fashion forming a multimeric L10(L12)X complex.

Its function is as follows. Forms part of the ribosomal stalk, playing a central role in the interaction of the ribosome with GTP-bound translation factors. The polypeptide is Large ribosomal subunit protein uL10 (Campylobacter lari (strain RM2100 / D67 / ATCC BAA-1060)).